A 586-amino-acid polypeptide reads, in one-letter code: 2-succinyl-5-enolpyruvyl-6-hydroxy-3-cyclohexene-1-carboxylate synthase (586 aa).

This sequence belongs to the TPP enzyme family. MenD subfamily. Homodimer. Requires Mg(2+) as cofactor. It depends on Mn(2+) as a cofactor. The cofactor is thiamine diphosphate.

It catalyses the reaction isochorismate + 2-oxoglutarate + H(+) = 5-enolpyruvoyl-6-hydroxy-2-succinyl-cyclohex-3-ene-1-carboxylate + CO2. It participates in quinol/quinone metabolism; 1,4-dihydroxy-2-naphthoate biosynthesis; 1,4-dihydroxy-2-naphthoate from chorismate: step 2/7. It functions in the pathway quinol/quinone metabolism; menaquinone biosynthesis. Catalyzes the thiamine diphosphate-dependent decarboxylation of 2-oxoglutarate and the subsequent addition of the resulting succinic semialdehyde-thiamine pyrophosphate anion to isochorismate to yield 2-succinyl-5-enolpyruvyl-6-hydroxy-3-cyclohexene-1-carboxylate (SEPHCHC). The polypeptide is 2-succinyl-5-enolpyruvyl-6-hydroxy-3-cyclohexene-1-carboxylate synthase (Geobacillus thermodenitrificans (strain NG80-2)).